The sequence spans 178 residues: DNA-directed RNA polymerase V subunit 7 (178 aa).

The protein belongs to the eukaryotic RPB7/RPC8 RNA polymerase subunit family. As to quaternary structure, component of the RNA polymerase V complex.

It localises to the nucleus. In terms of biological role, DNA-dependent RNA polymerase catalyzes the transcription of DNA into RNA using the four ribonucleoside triphosphates as substrates. Component of RNA polymerase V involved in RNA-directed DNA methylation-dependent (RdDM) silencing of endogenous repeated sequences, including transposable elements. This Arabidopsis thaliana (Mouse-ear cress) protein is DNA-directed RNA polymerase V subunit 7 (NRPE7).